We begin with the raw amino-acid sequence, 351 residues long: GDSL esterase/lipase At4g26790 (351 aa).

The N-terminal stretch at 1 to 25 is a signal peptide; sequence MQRNRVLAFLLLAAQLLVKIPETCA. Ser36 (nucleophile) is an active-site residue. Residue Asn118 is glycosylated (N-linked (GlcNAc...) asparagine). Residues Asp326 and His329 contribute to the active site.

This sequence belongs to the 'GDSL' lipolytic enzyme family.

The protein localises to the secreted. This chain is GDSL esterase/lipase At4g26790, found in Arabidopsis thaliana (Mouse-ear cress).